The primary structure comprises 178 residues: Actin-related protein 2/3 complex subunit 3-A (178 aa).

Belongs to the ARPC3 family. As to quaternary structure, component of the Arp2/3 complex composed of actr2/arp2, actr3/arp3, arpc1 (arpc1a or arpc1b), arpc2, arpc3, arpc4 and arpc5.

The protein resides in the cytoplasm. Its subcellular location is the cytoskeleton. The protein localises to the cell projection. It localises to the nucleus. Its function is as follows. Component of the Arp2/3 complex, a multiprotein complex that mediates actin polymerization upon stimulation by nucleation-promoting factor (NPF). The Arp2/3 complex mediates the formation of branched actin networks in the cytoplasm, providing the force for cell motility. In addition to its role in the cytoplasmic cytoskeleton, the Arp2/3 complex also promotes actin polymerization in the nucleus, thereby regulating gene transcription and repair of damaged DNA. The Arp2/3 complex promotes homologous recombination (HR) repair in response to DNA damage by promoting nuclear actin polymerization, leading to drive motility of double-strand breaks (DSBs). The sequence is that of Actin-related protein 2/3 complex subunit 3-A (arpc3-a) from Xenopus laevis (African clawed frog).